The chain runs to 497 residues: Nucleoside transporter 1 (497 aa).

The Cytoplasmic segment spans residues 1-26 (MSLKGGTAAPAPMAPPRKWYDMTSAE). Residues 27 to 47 (FYVYVVAFMCGISIMMPINAV) form a helical membrane-spanning segment. The Extracellular portion of the chain corresponds to 48-77 (FSAPSYMLEYYLYATKDPFLVPKMTNFWTN). The chain crosses the membrane as a helical span at residues 78-98 (VMTYYNLISMVTSLVVEPLTL). Residues 99 to 107 (LKSFRKIPM) are Cytoplasmic-facing. A helical transmembrane segment spans residues 108–128 (LVRLLGGLSVLIIEIIVLMVV). At 129 to 135 (PARGTTE) the chain is on the extracellular side. The helical transmembrane segment at 136-156 (AGAVATMCIAGFIGGLGTSIF) threads the bilayer. The Cytoplasmic segment spans residues 157-172 (ESTVYGMFGAFPPSFT). The chain crosses the membrane as a helical span at residues 173-193 (SIMMGGVGISGVLTSLIQIIV). The Extracellular portion of the chain corresponds to 194-208 (KAALPDTYEGVKKQS). The helical transmembrane segment at 209-229 (YIYYSLDVGIQAATFIALIMM) threads the bilayer. Residues 230–337 (RFNSFAQLHF…SVFSVLRSVK (108 aa)) are Cytoplasmic-facing. The segment covering 286 to 299 (NAEAHKDDPLAERE) has biased composition (basic and acidic residues). Residues 286–316 (NAEAHKDDPLAERELSEEESGDSRAVEAAGE) form a disordered region. Residues 338 to 358 (WMFVACGFNFLITLFLFPGIA) traverse the membrane as a helical segment. Over 359 to 361 (TGM) the chain is Extracellular. The helical transmembrane segment at 362–382 (FPESKWFATVAVFIFNCCDVL) threads the bilayer. At 383-400 (GRFSSAFRITWPRRYNQR) the chain is on the cytoplasmic side. The helical transmembrane segment at 401-421 (WIIVAASFARVIFVPLLLLHS) threads the bilayer. The Extracellular segment spans residues 422–432 (YHYIPSEAYGY). A helical membrane pass occupies residues 433–453 (VMQVVFGLSSGYIASMALVLG). The Cytoplasmic portion of the chain corresponds to 454-465 (PQSKGIDNDGKR). The helical transmembrane segment at 466–486 (FVAGTLMGISILVGGTIGTVL) threads the bilayer. The Extracellular portion of the chain corresponds to 487 to 497 (SIMTQTIRETY).

It belongs to the SLC29A/ENT transporter (TC 2.A.57) family.

The protein resides in the cell membrane. It catalyses the reaction adenosine(in) = adenosine(out). The enzyme catalyses hypoxanthine(out) = hypoxanthine(in). The catalysed reaction is inosine(in) = inosine(out). It carries out the reaction uridine(out) = uridine(in). It catalyses the reaction cytidine(in) = cytidine(out). In terms of biological role, nucleoside transporter with broad substrate specificity. Transports adenosine with high affinity. Can also transport hypoxanthine, inosine, uridine and cytidine. The sequence is that of Nucleoside transporter 1 from Crithidia fasciculata.